The following is a 189-amino-acid chain: Pyridoxal 5'-phosphate synthase subunit PdxT (189 aa).

48-50 contributes to the L-glutamine binding site; the sequence is GES. Cys80 acts as the Nucleophile in catalysis. Residues Arg107 and 136-137 contribute to the L-glutamine site; that span reads IR. Residues His172 and Glu174 each act as charge relay system in the active site.

It belongs to the glutaminase PdxT/SNO family. In the presence of PdxS, forms a dodecamer of heterodimers. Only shows activity in the heterodimer.

The enzyme catalyses aldehydo-D-ribose 5-phosphate + D-glyceraldehyde 3-phosphate + L-glutamine = pyridoxal 5'-phosphate + L-glutamate + phosphate + 3 H2O + H(+). It catalyses the reaction L-glutamine + H2O = L-glutamate + NH4(+). The protein operates within cofactor biosynthesis; pyridoxal 5'-phosphate biosynthesis. Catalyzes the hydrolysis of glutamine to glutamate and ammonia as part of the biosynthesis of pyridoxal 5'-phosphate. The resulting ammonia molecule is channeled to the active site of PdxS. The polypeptide is Pyridoxal 5'-phosphate synthase subunit PdxT (Ruminiclostridium cellulolyticum (strain ATCC 35319 / DSM 5812 / JCM 6584 / H10) (Clostridium cellulolyticum)).